We begin with the raw amino-acid sequence, 457 residues long: UDP-N-acetylmuramoylalanine--D-glutamate ligase (457 aa).

An ATP-binding site is contributed by 116–122; it reads GTNGKTT.

It belongs to the MurCDEF family.

The protein localises to the cytoplasm. The catalysed reaction is UDP-N-acetyl-alpha-D-muramoyl-L-alanine + D-glutamate + ATP = UDP-N-acetyl-alpha-D-muramoyl-L-alanyl-D-glutamate + ADP + phosphate + H(+). It participates in cell wall biogenesis; peptidoglycan biosynthesis. In terms of biological role, cell wall formation. Catalyzes the addition of glutamate to the nucleotide precursor UDP-N-acetylmuramoyl-L-alanine (UMA). In Caldicellulosiruptor bescii (strain ATCC BAA-1888 / DSM 6725 / KCTC 15123 / Z-1320) (Anaerocellum thermophilum), this protein is UDP-N-acetylmuramoylalanine--D-glutamate ligase.